A 466-amino-acid chain; its full sequence is Soluble pyridine nucleotide transhydrogenase (466 aa).

36 to 45 contributes to the FAD binding site; the sequence is ERYQNVGGGC.

It belongs to the class-I pyridine nucleotide-disulfide oxidoreductase family. In terms of assembly, homooligomer; probable homooctamer. Requires FAD as cofactor.

It localises to the cytoplasm. The catalysed reaction is NAD(+) + NADPH = NADH + NADP(+). Conversion of NADPH, generated by peripheral catabolic pathways, to NADH, which can enter the respiratory chain for energy generation. This Shigella flexneri protein is Soluble pyridine nucleotide transhydrogenase.